The following is a 30-amino-acid chain: Kalata-B16 (30 aa).

The cyclopeptide (Gly-Asp) cross-link spans 1 to 30 (GIPCAESCVYIPCTITALLGCKCQDKVCYD). Disulfide bonds link Cys-4/Cys-21, Cys-8/Cys-23, and Cys-13/Cys-28.

This is a cyclic peptide.

In terms of biological role, probably participates in a plant defense mechanism. In Oldenlandia affinis, this protein is Kalata-B16.